We begin with the raw amino-acid sequence, 297 residues long: Phosphoribosylaminoimidazole-succinocarboxamide synthase (297 aa).

Belongs to the SAICAR synthetase family.

The enzyme catalyses 5-amino-1-(5-phospho-D-ribosyl)imidazole-4-carboxylate + L-aspartate + ATP = (2S)-2-[5-amino-1-(5-phospho-beta-D-ribosyl)imidazole-4-carboxamido]succinate + ADP + phosphate + 2 H(+). It functions in the pathway purine metabolism; IMP biosynthesis via de novo pathway; 5-amino-1-(5-phospho-D-ribosyl)imidazole-4-carboxamide from 5-amino-1-(5-phospho-D-ribosyl)imidazole-4-carboxylate: step 1/2. This chain is Phosphoribosylaminoimidazole-succinocarboxamide synthase, found in Mycobacterium sp. (strain KMS).